A 298-amino-acid polypeptide reads, in one-letter code: ATP synthase gamma chain (298 aa).

This sequence belongs to the ATPase gamma chain family. As to quaternary structure, F-type ATPases have 2 components, CF(1) - the catalytic core - and CF(0) - the membrane proton channel. CF(1) has five subunits: alpha(3), beta(3), gamma(1), delta(1), epsilon(1). CF(0) has three main subunits: a, b and c.

It localises to the cell inner membrane. Its function is as follows. Produces ATP from ADP in the presence of a proton gradient across the membrane. The gamma chain is believed to be important in regulating ATPase activity and the flow of protons through the CF(0) complex. The chain is ATP synthase gamma chain from Francisella philomiragia subsp. philomiragia (strain ATCC 25017 / CCUG 19701 / FSC 153 / O#319-036).